A 140-amino-acid chain; its full sequence is MKIHAILVVAFLVLMKTAVSQDNNPLEHCRDVFVSFMPCMGFVEGIFQQPSPDCCRGVTHLNNVVKFTSPGSRNRQDSGETERVCLCIEIMGNANHLPFLPAAINNLPLRCSLTLSFPISVDMDCSQFRNTKNPDVEKLN.

A signal peptide spans 1-20 (MKIHAILVVAFLVLMKTAVS). 4 disulfides stabilise this stretch: cysteine 29–cysteine 87, cysteine 39–cysteine 54, cysteine 55–cysteine 111, and cysteine 85–cysteine 125.

Belongs to the plant LTP family. Tapetum-specific. Also present in pollen.

The protein resides in the endoplasmic reticulum lumen. This is Protein ARABIDOPSIS THALIANA ANTHER 7 from Arabidopsis thaliana (Mouse-ear cress).